A 54-amino-acid polypeptide reads, in one-letter code: Large ribosomal subunit protein bL33 (54 aa).

The protein belongs to the bacterial ribosomal protein bL33 family.

The polypeptide is Large ribosomal subunit protein bL33 (Buchnera aphidicola subsp. Cinara cedri (strain Cc)).